Reading from the N-terminus, the 188-residue chain is Accessory gene regulator protein B (188 aa).

The next 4 helical transmembrane spans lie at 49-69 (LALL…FLTL), 104-126 (ISFQ…YAPA), 143-163 (IKSI…PPPY), and 166-186 (FVVY…SIKE).

This sequence belongs to the AgrB family.

It is found in the cell membrane. Essential for the production of a quorum sensing system signal molecule, the autoinducing peptide (AIP). This quorum sensing system is responsible for the regulation of the expression of virulence factor genes. Involved in the proteolytic processing of AgrD, the precursor of AIP. The sequence is that of Accessory gene regulator protein B from Staphylococcus intermedius.